Here is a 294-residue protein sequence, read N- to C-terminus: UPF0761 membrane protein YPTS_0028 (294 aa).

A run of 7 helical transmembrane segments spans residues 44–64, 67–87, 108–128, 136–156, 185–205, 212–232, and 246–266; these read LLSLVPLITVIFALFAAFPMF, ISIKLKAFIFANFIPATGDII, GLIVTALLLIYSVDSVLNIIW, LVFSFAVYWMVLTLGPILVGA, VFPLLISWVSFWLLYSVVPTV, ALIGALVAALLFELGKKGFAM, and VLAVIPILFLWVYWSWCIVLL.

It belongs to the UPF0761 family.

The protein resides in the cell inner membrane. The sequence is that of UPF0761 membrane protein YPTS_0028 from Yersinia pseudotuberculosis serotype IB (strain PB1/+).